Here is a 261-residue protein sequence, read N- to C-terminus: 22 kDa alpha-zein 8b (261 aa).

Positions 1 to 16 are cleaved as a signal peptide; sequence LALLALLALFVSATNA.

The protein belongs to the zein family.

Its function is as follows. Zeins are major seed storage proteins. This is 22 kDa alpha-zein 8b from Zea mays (Maize).